The chain runs to 273 residues: Probable ribosomal RNA small subunit methyltransferase A (273 aa).

S-adenosyl-L-methionine-binding residues include Asn23, Leu25, Gly50, Glu71, Asp95, and Asn110.

This sequence belongs to the class I-like SAM-binding methyltransferase superfamily. rRNA adenine N(6)-methyltransferase family. RsmA subfamily.

The protein resides in the cytoplasm. Functionally, specifically dimethylates two adjacent adenosines in the loop of a conserved hairpin near the 3'-end of 16S rRNA in the 30S particle. May play a critical role in biogenesis of 30S subunits. The chain is Probable ribosomal RNA small subunit methyltransferase A from Pyrococcus furiosus (strain ATCC 43587 / DSM 3638 / JCM 8422 / Vc1).